Consider the following 93-residue polypeptide: Pyrimidine/purine nucleoside phosphorylase (93 aa).

The protein belongs to the nucleoside phosphorylase PpnP family.

The catalysed reaction is a purine D-ribonucleoside + phosphate = a purine nucleobase + alpha-D-ribose 1-phosphate. The enzyme catalyses adenosine + phosphate = alpha-D-ribose 1-phosphate + adenine. It carries out the reaction cytidine + phosphate = cytosine + alpha-D-ribose 1-phosphate. It catalyses the reaction guanosine + phosphate = alpha-D-ribose 1-phosphate + guanine. The catalysed reaction is inosine + phosphate = alpha-D-ribose 1-phosphate + hypoxanthine. The enzyme catalyses thymidine + phosphate = 2-deoxy-alpha-D-ribose 1-phosphate + thymine. It carries out the reaction uridine + phosphate = alpha-D-ribose 1-phosphate + uracil. It catalyses the reaction xanthosine + phosphate = alpha-D-ribose 1-phosphate + xanthine. Its function is as follows. Catalyzes the phosphorolysis of diverse nucleosides, yielding D-ribose 1-phosphate and the respective free bases. Can use uridine, adenosine, guanosine, cytidine, thymidine, inosine and xanthosine as substrates. Also catalyzes the reverse reactions. The polypeptide is Pyrimidine/purine nucleoside phosphorylase (Sorangium cellulosum (strain So ce56) (Polyangium cellulosum (strain So ce56))).